We begin with the raw amino-acid sequence, 394 residues long: Ribose-phosphate pyrophosphokinase 5, chloroplastic (394 aa).

The transit peptide at 1–33 (MASIVQPSPTFPALNLRRSSLIRPPSSVRFPLK) directs the protein to the chloroplast. The Mg(2+) site is built by Asp202, His204, Asp213, and Asp217. Residues 288-303 (GKVAIMVDDMIDTAGT) are binding of phosphoribosylpyrophosphate.

Belongs to the ribose-phosphate pyrophosphokinase family.

The protein resides in the plastid. Its subcellular location is the chloroplast. The catalysed reaction is D-ribose 5-phosphate + ATP = 5-phospho-alpha-D-ribose 1-diphosphate + AMP + H(+). This chain is Ribose-phosphate pyrophosphokinase 5, chloroplastic (PRS5), found in Arabidopsis thaliana (Mouse-ear cress).